Reading from the N-terminus, the 208-residue chain is Ribosome maturation factor RimP (208 aa).

The tract at residues 165 to 208 (TAQPKKGQRQGKEPAKESGQKKQLAEAAPRSGSKRSERGSEKRK) is disordered. Basic and acidic residues-rich tracts occupy residues 174–188 (QGKEPAKESGQKKQL) and 198–208 (KRSERGSEKRK).

Belongs to the RimP family.

The protein localises to the cytoplasm. Required for maturation of 30S ribosomal subunits. The protein is Ribosome maturation factor RimP of Sorangium cellulosum (strain So ce56) (Polyangium cellulosum (strain So ce56)).